The sequence spans 360 residues: S-adenosylmethionine:tRNA ribosyltransferase-isomerase (360 aa).

Belongs to the QueA family. As to quaternary structure, monomer.

The protein localises to the cytoplasm. It catalyses the reaction 7-aminomethyl-7-carbaguanosine(34) in tRNA + S-adenosyl-L-methionine = epoxyqueuosine(34) in tRNA + adenine + L-methionine + 2 H(+). It participates in tRNA modification; tRNA-queuosine biosynthesis. Functionally, transfers and isomerizes the ribose moiety from AdoMet to the 7-aminomethyl group of 7-deazaguanine (preQ1-tRNA) to give epoxyqueuosine (oQ-tRNA). The chain is S-adenosylmethionine:tRNA ribosyltransferase-isomerase from Rhizobium rhizogenes (strain K84 / ATCC BAA-868) (Agrobacterium radiobacter).